Consider the following 505-residue polypeptide: Lysine--tRNA ligase (505 aa).

Mg(2+) is bound by residues Glu-415 and Glu-422.

Belongs to the class-II aminoacyl-tRNA synthetase family. Homodimer. The cofactor is Mg(2+).

The protein resides in the cytoplasm. It carries out the reaction tRNA(Lys) + L-lysine + ATP = L-lysyl-tRNA(Lys) + AMP + diphosphate. The chain is Lysine--tRNA ligase from Pectobacterium atrosepticum (strain SCRI 1043 / ATCC BAA-672) (Erwinia carotovora subsp. atroseptica).